The sequence spans 432 residues: Glutamyl-tRNA reductase (432 aa).

Substrate-binding positions include 55 to 58, Ser-114, 119 to 121, and Gln-125; these read TCNR and ETQ. Cys-56 serves as the catalytic Nucleophile. Residue 194–199 coordinates NADP(+); the sequence is GAGEMI.

This sequence belongs to the glutamyl-tRNA reductase family. As to quaternary structure, homodimer.

It carries out the reaction (S)-4-amino-5-oxopentanoate + tRNA(Glu) + NADP(+) = L-glutamyl-tRNA(Glu) + NADPH + H(+). Its pathway is porphyrin-containing compound metabolism; protoporphyrin-IX biosynthesis; 5-aminolevulinate from L-glutamyl-tRNA(Glu): step 1/2. Catalyzes the NADPH-dependent reduction of glutamyl-tRNA(Glu) to glutamate 1-semialdehyde (GSA). This chain is Glutamyl-tRNA reductase, found in Burkholderia orbicola (strain MC0-3).